The following is a 270-amino-acid chain: S-adenosylmethionine decarboxylase proenzyme (270 aa).

Ser-117 serves as the catalytic Schiff-base intermediate with substrate; via pyruvic acid. Ser-117 is modified (pyruvic acid (Ser); by autocatalysis). His-122 serves as the catalytic Proton acceptor; for processing activity. The active-site Proton donor; for catalytic activity is Cys-145.

The protein belongs to the prokaryotic AdoMetDC family. Type 2 subfamily. In terms of assembly, heterooctamer of four alpha and four beta chains arranged as a tetramer of alpha/beta heterodimers. Requires pyruvate as cofactor. Post-translationally, is synthesized initially as an inactive proenzyme. Formation of the active enzyme involves a self-maturation process in which the active site pyruvoyl group is generated from an internal serine residue via an autocatalytic post-translational modification. Two non-identical subunits are generated from the proenzyme in this reaction, and the pyruvate is formed at the N-terminus of the alpha chain, which is derived from the carboxyl end of the proenzyme. The post-translation cleavage follows an unusual pathway, termed non-hydrolytic serinolysis, in which the side chain hydroxyl group of the serine supplies its oxygen atom to form the C-terminus of the beta chain, while the remainder of the serine residue undergoes an oxidative deamination to produce ammonia and the pyruvoyl group blocking the N-terminus of the alpha chain.

It catalyses the reaction S-adenosyl-L-methionine + H(+) = S-adenosyl 3-(methylsulfanyl)propylamine + CO2. The protein operates within amine and polyamine biosynthesis; S-adenosylmethioninamine biosynthesis; S-adenosylmethioninamine from S-adenosyl-L-methionine: step 1/1. Its function is as follows. Catalyzes the decarboxylation of S-adenosylmethionine to S-adenosylmethioninamine (dcAdoMet), the propylamine donor required for the synthesis of the polyamines spermine and spermidine from the diamine putrescine. This Pseudoalteromonas translucida (strain TAC 125) protein is S-adenosylmethionine decarboxylase proenzyme.